A 943-amino-acid chain; its full sequence is Protein translocase subunit SecA (943 aa).

ATP is bound by residues Gln-90, 108–112 (GEGKT), and Asp-509. The disordered stretch occupies residues 535–562 (PDNEHKPPIPKQRNSKSKGGFSRKAGSN).

It belongs to the SecA family. Monomer and homodimer. Part of the essential Sec protein translocation apparatus which comprises SecA, SecYEG and auxiliary proteins SecDF. Other proteins may also be involved.

The protein resides in the cell inner membrane. Its subcellular location is the cellular thylakoid membrane. It localises to the cytoplasm. It catalyses the reaction ATP + H2O + cellular proteinSide 1 = ADP + phosphate + cellular proteinSide 2.. Part of the Sec protein translocase complex. Interacts with the SecYEG preprotein conducting channel. Has a central role in coupling the hydrolysis of ATP to the transfer of proteins into and across the cell membrane, serving as an ATP-driven molecular motor driving the stepwise translocation of polypeptide chains across the membrane. Its function is as follows. Probably participates in protein translocation into and across both the cytoplasmic and thylakoid membranes in cyanobacterial cells. This Prochlorococcus marinus (strain AS9601) protein is Protein translocase subunit SecA.